Reading from the N-terminus, the 545-residue chain is Prolyl 3-hydroxylase OGFOD1 (545 aa).

The interval 1-23 (MNGKRPADPGPARPMKKGKKQVS) is disordered. In terms of domain architecture, Fe2OG dioxygenase spans 137 to 239 (PTIDMSCAKY…RLSISGWFYG (103 aa)). Fe cation is bound by residues His-155 and Asp-157. 2-oxoglutarate is bound at residue Tyr-169. Residue His-218 coordinates Fe cation. A 2-oxoglutarate-binding site is contributed by Arg-230. Acidic residues predominate over residues 371–380 (SEDDETEEKG). The segment at 371 to 437 (SEDDETEEKG…EAKKESSVPM (67 aa)) is disordered. Low complexity predominate over residues 383 to 393 (ETASAAAGTEE). A compositionally biased stretch (polar residues) spans 402 to 417 (PENNQVAAGSHSQENG).

It belongs to the TPA1 family. As to quaternary structure, monomer. Requires Fe(2+) as cofactor. L-ascorbate is required as a cofactor.

Its subcellular location is the cytoplasm. The protein resides in the nucleus. It catalyses the reaction [ribosomal protein uS12]-L-proline + 2-oxoglutarate + O2 = [ribosomal protein uS12]-(3S)-3-hydroxy-L-proline + succinate + CO2. Functionally, prolyl 3-hydroxylase that catalyzes 3-hydroxylation of 'Pro-62' of small ribosomal subunit uS12 (RPS23), thereby regulating protein translation termination efficiency. Involved in stress granule formation. This is Prolyl 3-hydroxylase OGFOD1 (Ogfod1) from Mus musculus (Mouse).